The primary structure comprises 883 residues: Valine--tRNA ligase (883 aa).

Positions 50-60 (PNVTGKLHMGH) match the 'HIGH' region motif. A 'KMSKS' region motif is present at residues 527-531 (KMSKS). Lysine 530 is an ATP binding site. Residues 811 to 883 (LNELIDLDEE…KQRLEQLQRA (73 aa)) are a coiled coil. A disordered region spans residues 859 to 883 (QRTKRSDFEDQLTSTKQRLEQLQRA).

It belongs to the class-I aminoacyl-tRNA synthetase family. ValS type 1 subfamily. Monomer.

The protein resides in the cytoplasm. The enzyme catalyses tRNA(Val) + L-valine + ATP = L-valyl-tRNA(Val) + AMP + diphosphate. Its function is as follows. Catalyzes the attachment of valine to tRNA(Val). As ValRS can inadvertently accommodate and process structurally similar amino acids such as threonine, to avoid such errors, it has a 'posttransfer' editing activity that hydrolyzes mischarged Thr-tRNA(Val) in a tRNA-dependent manner. The chain is Valine--tRNA ligase from Lacticaseibacillus casei (Lactobacillus casei).